Reading from the N-terminus, the 182-residue chain is MMTPGGSGRLRPLPTAMYAGYSGTASSWVAKTSVSASGKRIQREMAELNIDPPPDCSAGPKGDNLYHWIATIIGPSGTPYEGGIFFLDIIFPSDYPFKPPKLVFKTRIYHCNVDTAGDLSVNILRDSWSPALTITKVLQAIRSIFLKPEPYSPALPVIARLYLTDREKHDEVAKEWTLRFAK.

Residues 36-182 (ASGKRIQREM…AKEWTLRFAK (147 aa)) form the UBC core domain.

The protein belongs to the ubiquitin-conjugating enzyme family. Component of the CDD complex, at least composed of COP10, DET1 and DDB1A. Interacts with E3 ubiquitin ligase COP1. Interacts with E2 ubiquitin conjugating UBC5. Interacts with CSN3, CSN4 and CSN8 subunits of the COP9 complex. Expressed in flower, leaf, stem and seedling. Expressed at lower level in root.

It is found in the nucleus. Component of light signal transduction machinery. Involved in repression of photomorphogenesis in darkness by participating in the CDD complex, a complex probably required to regulate the activity of ubiquitin conjugating enzymes (E2s). Repression of photomorphogenesis is probably mediated by ubiquitination and subsequent degradation of photomorphogenesis-promoting factors such as HY5, HYH and LAF1. Although strongly related to ubiquitin-conjugating enzyme, it has no catalytic activity by itself due to the absence of the conserved Cys active site at position 120. It can however enhance the activity of E2 conjugating enzymes. This Arabidopsis thaliana (Mouse-ear cress) protein is Constitutive photomorphogenesis protein 10 (COP10).